The following is a 62-amino-acid chain: Beta-defensin 10 (62 aa).

An N-terminal signal peptide occupies residues 1–22 (MRLHHLLLLLLLVVLSSGSGFT). Gln-23 carries the pyrrolidone carboxylic acid modification. 3 disulfides stabilise this stretch: Cys-31/Cys-60, Cys-38/Cys-53, and Cys-43/Cys-61.

It belongs to the beta-defensin family. In terms of tissue distribution, neutrophilic granules.

It localises to the secreted. Has bactericidal activity. Active against E.coli ML35 and S.aureus 502A. This Bos taurus (Bovine) protein is Beta-defensin 10 (DEFB10).